The following is a 66-amino-acid chain: Large ribosomal subunit protein bL31 (66 aa).

Zn(2+)-binding residues include cysteine 16, cysteine 18, cysteine 36, and cysteine 39.

The protein belongs to the bacterial ribosomal protein bL31 family. Type A subfamily. As to quaternary structure, part of the 50S ribosomal subunit. It depends on Zn(2+) as a cofactor.

In terms of biological role, binds the 23S rRNA. The polypeptide is Large ribosomal subunit protein bL31 (Campylobacter jejuni subsp. jejuni serotype O:6 (strain 81116 / NCTC 11828)).